Here is a 299-residue protein sequence, read N- to C-terminus: Acetaldehyde dehydrogenase 1 (299 aa).

Residue Cys130 is the Acyl-thioester intermediate of the active site. Residues 161-169 and Asn272 each bind NAD(+); that span reads SVGPGTRKN.

The protein belongs to the acetaldehyde dehydrogenase family.

The catalysed reaction is acetaldehyde + NAD(+) + CoA = acetyl-CoA + NADH + H(+). The chain is Acetaldehyde dehydrogenase 1 (mhpF) from Burkholderia cenocepacia (strain ATCC BAA-245 / DSM 16553 / LMG 16656 / NCTC 13227 / J2315 / CF5610) (Burkholderia cepacia (strain J2315)).